Here is a 275-residue protein sequence, read N- to C-terminus: Large ribosomal subunit protein uL2c (275 aa).

The interval 219–254 (TVRGSVMNPCDHPHGGGEGRAPIGRTRPLTPWGKPA) is disordered.

This sequence belongs to the universal ribosomal protein uL2 family. Part of the 50S ribosomal subunit.

The protein localises to the plastid. It is found in the chloroplast. The chain is Large ribosomal subunit protein uL2c (rpl2) from Phaeodactylum tricornutum (strain CCAP 1055/1).